The sequence spans 99 residues: Putative protein tag-209 (99 aa).

An N-terminal signal peptide occupies residues 1-16; that stretch reads MLKLLAFVALLSVSVS.

The chain is Putative protein tag-209 (tag-209) from Caenorhabditis elegans.